A 233-amino-acid chain; its full sequence is DNA repair protein RecO (233 aa).

This sequence belongs to the RecO family.

Functionally, involved in DNA repair and RecF pathway recombination. This chain is DNA repair protein RecO, found in Francisella philomiragia subsp. philomiragia (strain ATCC 25017 / CCUG 19701 / FSC 153 / O#319-036).